Here is a 294-residue protein sequence, read N- to C-terminus: tRNA dimethylallyltransferase (294 aa).

11-18 (GPTAVGKT) is a binding site for ATP. A substrate-binding site is contributed by 13–18 (TAVGKT). The interaction with substrate tRNA stretch occupies residues 36–39 (DSQQ).

This sequence belongs to the IPP transferase family. Monomer. Requires Mg(2+) as cofactor.

The catalysed reaction is adenosine(37) in tRNA + dimethylallyl diphosphate = N(6)-dimethylallyladenosine(37) in tRNA + diphosphate. Catalyzes the transfer of a dimethylallyl group onto the adenine at position 37 in tRNAs that read codons beginning with uridine, leading to the formation of N6-(dimethylallyl)adenosine (i(6)A). This chain is tRNA dimethylallyltransferase, found in Lactococcus lactis subsp. lactis (strain IL1403) (Streptococcus lactis).